Here is a 284-residue protein sequence, read N- to C-terminus: D-tagatose-1,6-bisphosphate aldolase subunit GatY (284 aa).

Asp82 serves as the catalytic Proton donor. Zn(2+) contacts are provided by His83 and His180. Dihydroxyacetone phosphate is bound at residue Gly181. His208 is a binding site for Zn(2+). Residues 209–211 (GAS) and 230–233 (NVAT) contribute to the dihydroxyacetone phosphate site.

Belongs to the class II fructose-bisphosphate aldolase family. TagBP aldolase GatY subfamily. As to quaternary structure, forms a complex with GatZ. Zn(2+) is required as a cofactor.

The catalysed reaction is D-tagatofuranose 1,6-bisphosphate = D-glyceraldehyde 3-phosphate + dihydroxyacetone phosphate. It functions in the pathway carbohydrate metabolism; D-tagatose 6-phosphate degradation; D-glyceraldehyde 3-phosphate and glycerone phosphate from D-tagatose 6-phosphate: step 2/2. Its function is as follows. Catalytic subunit of the tagatose-1,6-bisphosphate aldolase GatYZ, which catalyzes the reversible aldol condensation of dihydroxyacetone phosphate (DHAP or glycerone-phosphate) with glyceraldehyde 3-phosphate (G3P) to produce tagatose 1,6-bisphosphate (TBP). Requires GatZ subunit for full activity and stability. Is involved in the catabolism of galactitol. The protein is D-tagatose-1,6-bisphosphate aldolase subunit GatY of Escherichia coli O7:K1 (strain IAI39 / ExPEC).